The following is a 571-amino-acid chain: Urease subunit alpha (571 aa).

The Ni(2+) site is built by histidine 138, histidine 140, and lysine 221. An N6-carboxylysine modification is found at lysine 221. Histidine 223 is a binding site for substrate. Ni(2+) contacts are provided by histidine 250 and histidine 276. The active-site Proton donor is the histidine 324. Residue aspartate 364 coordinates Ni(2+).

The protein belongs to the metallo-dependent hydrolases superfamily. Urease alpha subunit family. As to quaternary structure, heterotrimer of UreA (gamma), UreB (beta) and UreC (alpha) subunits. Three heterotrimers associate to form the active enzyme. The cofactor is Ni cation. In terms of processing, carboxylation allows a single lysine to coordinate two nickel ions.

The protein localises to the cytoplasm. It carries out the reaction urea + 2 H2O + H(+) = hydrogencarbonate + 2 NH4(+). Its pathway is nitrogen metabolism; urea degradation; CO(2) and NH(3) from urea (urease route): step 1/1. The sequence is that of Urease subunit alpha from Staphylococcus aureus (strain JH9).